The primary structure comprises 690 residues: Exonuclease GOR (690 aa).

Disordered stretches follow at residues 136-162 (TRVA…NRSG) and 567-690 (QPRH…SLHH). Residues 585–595 (APSTTAISPES) show a composition bias toward polar residues. A compositionally biased stretch (basic and acidic residues) spans 605–614 (KETGAVDGRR). Residues 612-626 (GRRGQKAKSNPNRPL) form a GOR14-1 epitope region. Residues 631–646 (NPCRGPSGLSPSLCPS) show a composition bias toward low complexity. The span at 661 to 682 (PPLPVPRVPAAPPRACPHPSAH) shows a compositional bias: pro residues.

The protein belongs to the REXO1/REXO3 family.

It localises to the cytoplasm. The protein localises to the nucleus. The polypeptide is Exonuclease GOR (REXO1L1) (Pan troglodytes (Chimpanzee)).